The sequence spans 220 residues: UPF0758 protein APL_1970 (220 aa).

The MPN domain occupies 98 to 220 (NINEPYLAVM…YFSFEEEKFR (123 aa)). Histidine 169, histidine 171, and aspartate 182 together coordinate Zn(2+). The JAMM motif signature appears at 169–182 (HNHPSGNCTPSESD).

The protein belongs to the UPF0758 family.

In Actinobacillus pleuropneumoniae serotype 5b (strain L20), this protein is UPF0758 protein APL_1970.